The following is a 579-amino-acid chain: Glypican-3 (579 aa).

A signal peptide spans 1 to 24; that stretch reads MAGTVRTACLLVAMLLGLGCLGQA. Gln-25 carries the pyrrolidone carboxylic acid modification. Disulfide bonds link Cys-34–Cys-71, Cys-64–Cys-261, Cys-72–Cys-264, Cys-196–Cys-348, Cys-251–Cys-284, Cys-273–Cys-421, and Cys-277–Cys-409. N-linked (GlcNAc...) asparagine glycosylation is found at Asn-123 and Asn-240. Position 351 is a phosphoserine (Ser-351). Asn-417 is a glycosylation site (N-linked (GlcNAc...) asparagine). 2 O-linked (Xyl...) (glycosaminoglycan) serine glycosylation sites follow: Ser-494 and Ser-508. A disordered region spans residues 533 to 552; that stretch reads DAPGNKQHGNQKDNEITTSH. Ser-553 is lipidated: GPI-anchor amidated serine. Residues 554–579 constitute a propeptide, removed in mature form; it reads VGNMPSPLKILISVAIYVACFFFLVH.

The protein belongs to the glypican family. In terms of assembly, heterodimer; disulfide-linked. Cleavage by a furin-like convertase results in production of alpha and beta chains which form a disulfide-linked heterodimer. Interacts with DPP4. Interacts with FGF2. Interacts with WNT5A. Also interacts with WNT3A and WNT7B. Interacts with hedgehog protein SHH; the heparan sulfate chains are not required for the interaction. Also interacts with hedgehog protein IHH. Interacts with CD81. Interacts with Wnt receptors FZD4, FZD7 and FZD8; the heparan sulfate chains are required for the interaction. Post-translationally, O-glycosylated; contains heparan sulfate and/or chondroitin sulfate. In terms of processing, cleaved intracellularly by a furin-like convertase to generate 2 subunits, alpha and beta, which remain associated through disulfide bonds and are associated with the cell surface via the GPI-anchor. This processing is essential for its role in inhibition of hedgehog signaling. A second proteolytic event may result in cleavage of the protein on the cell surface, separating it from the GPI-anchor and leading to its shedding from the cell surface. In terms of tissue distribution, in the developing limb, absent from the apical epidermal ridge at 11 dpc but highly expressed in the underlying mesenchyme. Expression in the mesenchyme at this stage is asymmetric with highest levels in the regions of the distal mesenchyme within the progress zone and within the proximal anterior and posterior limb bud. At later developmental stages including 12.5 and 13.5 dpc, expression is restricted to the interdigital webs and the regions of chondrocytic differentiation of the developing bones. In the embryonic kidney, expressed in both the ureteric bud and mesenchymal cells as early as 13.5 dpc. Expression at 16.5 dpc is similar to that at 13.5 dpc but decreases by 18.5 dpc.

It localises to the cell membrane. In terms of biological role, cell surface proteoglycan. Negatively regulates the hedgehog signaling pathway when attached via the GPI-anchor to the cell surface by competing with the hedgehog receptor PTC1 for binding to hedgehog proteins. Binding to the hedgehog protein SHH triggers internalization of the complex by endocytosis and its subsequent lysosomal degradation. Positively regulates the canonical Wnt signaling pathway by binding to the Wnt receptor Frizzled and stimulating the binding of the Frizzled receptor to Wnt ligands. Positively regulates the non-canonical Wnt signaling pathway. Binds to CD81 which decreases the availability of free CD81 for binding to the transcriptional repressor HHEX, resulting in nuclear translocation of HHEX and transcriptional repression. Inhibits the dipeptidyl peptidase activity of DPP4. Plays a role in limb patterning and skeletal development by controlling the cellular response to BMP4. Modulates the effects of growth factors BMP2, BMP7 and FGF7 on renal branching morphogenesis. Required for coronary vascular development. Plays a role in regulating cell movements during gastrulation. This chain is Glypican-3 (Gpc3), found in Mus musculus (Mouse).